We begin with the raw amino-acid sequence, 320 residues long: Ferrochelatase (320 aa).

The Fe cation site is built by His-194 and Glu-272.

Belongs to the ferrochelatase family.

Its subcellular location is the cytoplasm. The enzyme catalyses heme b + 2 H(+) = protoporphyrin IX + Fe(2+). It participates in porphyrin-containing compound metabolism; protoheme biosynthesis; protoheme from protoporphyrin-IX: step 1/1. Functionally, catalyzes the ferrous insertion into protoporphyrin IX. This is Ferrochelatase from Desulfotalea psychrophila (strain LSv54 / DSM 12343).